The primary structure comprises 580 residues: Conglutin beta 3 (580 aa).

Positions 1–30 are cleaved as a signal peptide; that stretch reads MAKMRVRFPTLVLLLGIVFLMAVSIGIAYG. 2 stretches are compositionally biased toward basic and acidic residues: residues 37–72 and 79–92; these read NHERPQEREQEERDPRQQPRPHHQEEQEREHRRESE and REQRREPRREREQE. The disordered stretch occupies residues 37 to 165; the sequence is NHERPQEREQ…DSRRQRNPYY (129 aa). Residues 124–133 are compositionally biased toward low complexity; sequence QGSSSSSRRQ. A compositionally biased stretch (basic and acidic residues) spans 134–145; that stretch reads SGYERREQREER. 2 Cupin type-1 domains span residues 164–322 and 381–538; these read YYFS…EEIQ and FNLR…EDVE. N-linked (GlcNAc...) asparagine glycosylation is found at N229 and N488. The disordered stretch occupies residues 549–569; the sequence is FANAQPQQQQQREREGRHGRR.

This sequence belongs to the 7S seed storage protein family. As to quaternary structure, component of globulins complexes which accumulate in seeds.

Seed storage protein. Accumulates during seed development and is hydrolyzed after germination to provide a carbon and nitrogen source for the developing seedling. The protein is Conglutin beta 3 of Lupinus angustifolius (Narrow-leaved blue lupine).